A 193-amino-acid chain; its full sequence is Holliday junction branch migration complex subunit RuvA (193 aa).

The domain I stretch occupies residues 1–63; the sequence is MIGKLTGTVT…ENINKLYGFE (63 aa). A domain II region spans residues 64-148; that stretch reads CRKSQEVARM…GIASSTNVHI (85 aa). The flexible linker stretch occupies residues 149 to 150; it reads AS. Positions 150–193 are domain III; that stretch reads SEAVSALVKLGFQHKPSHKVVMEIMTKRPAIEIAELITLALKML.

This sequence belongs to the RuvA family. As to quaternary structure, homotetramer. Forms an RuvA(8)-RuvB(12)-Holliday junction (HJ) complex. HJ DNA is sandwiched between 2 RuvA tetramers; dsDNA enters through RuvA and exits via RuvB. An RuvB hexamer assembles on each DNA strand where it exits the tetramer. Each RuvB hexamer is contacted by two RuvA subunits (via domain III) on 2 adjacent RuvB subunits; this complex drives branch migration. In the full resolvosome a probable DNA-RuvA(4)-RuvB(12)-RuvC(2) complex forms which resolves the HJ.

It localises to the cytoplasm. Its function is as follows. The RuvA-RuvB-RuvC complex processes Holliday junction (HJ) DNA during genetic recombination and DNA repair, while the RuvA-RuvB complex plays an important role in the rescue of blocked DNA replication forks via replication fork reversal (RFR). RuvA specifically binds to HJ cruciform DNA, conferring on it an open structure. The RuvB hexamer acts as an ATP-dependent pump, pulling dsDNA into and through the RuvAB complex. HJ branch migration allows RuvC to scan DNA until it finds its consensus sequence, where it cleaves and resolves the cruciform DNA. This is Holliday junction branch migration complex subunit RuvA from Neorickettsia sennetsu (strain ATCC VR-367 / Miyayama) (Ehrlichia sennetsu).